A 725-amino-acid polypeptide reads, in one-letter code: Peroxisomal fatty acid beta-oxidation multifunctional protein MFP2 (725 aa).

Glu-119 (nucleophile) is an active-site residue. The active-site Proton acceptor is Glu-139. A Microbody targeting signal motif is present at residues 723 to 725; it reads SRL.

This sequence in the N-terminal section; belongs to the enoyl-CoA hydratase/isomerase family. In the central section; belongs to the 3-hydroxyacyl-CoA dehydrogenase family. In terms of tissue distribution, highly expressed in senescing leaves and at lower levels in flowers and siliques.

It is found in the glyoxysome. The protein resides in the peroxisome. The catalysed reaction is a (3S)-3-hydroxyacyl-CoA = a (2E)-enoyl-CoA + H2O. It catalyses the reaction a 4-saturated-(3S)-3-hydroxyacyl-CoA = a (3E)-enoyl-CoA + H2O. It carries out the reaction (3S)-3-hydroxybutanoyl-CoA = (2E)-butenoyl-CoA + H2O. The enzyme catalyses (3S)-hydroxyoctanoyl-CoA = (2E)-octenoyl-CoA + H2O. The catalysed reaction is (3S)-3-hydroxydodecanoyl-CoA = (2E)-dodecenoyl-CoA + H2O. It catalyses the reaction (3S)-hydroxytetradecanoyl-CoA = (2E)-tetradecenoyl-CoA + H2O. It carries out the reaction (3S)-hydroxyhexanoyl-CoA = (2E)-hexenoyl-CoA + H2O. The enzyme catalyses a (3Z)-enoyl-CoA = a 4-saturated (2E)-enoyl-CoA. The catalysed reaction is a (3E)-enoyl-CoA = a 4-saturated (2E)-enoyl-CoA. It catalyses the reaction (3S)-3-hydroxybutanoyl-CoA = (3R)-3-hydroxybutanoyl-CoA. It carries out the reaction a (3S)-3-hydroxyacyl-CoA + NAD(+) = a 3-oxoacyl-CoA + NADH + H(+). The enzyme catalyses (3S)-3-hydroxybutanoyl-CoA + NAD(+) = acetoacetyl-CoA + NADH + H(+). The catalysed reaction is (3S)-hydroxyhexanoyl-CoA + NAD(+) = 3-oxohexanoyl-CoA + NADH + H(+). It catalyses the reaction (3S)-hydroxyoctanoyl-CoA + NAD(+) = 3-oxooctanoyl-CoA + NADH + H(+). It carries out the reaction (3S)-3-hydroxydodecanoyl-CoA + NAD(+) = 3-oxododecanoyl-CoA + NADH + H(+). The enzyme catalyses (3S)-hydroxytetradecanoyl-CoA + NAD(+) = 3-oxotetradecanoyl-CoA + NADH + H(+). It participates in lipid metabolism; fatty acid beta-oxidation. Its function is as follows. Involved in peroxisomal fatty acid beta-oxidation during seed germination. Possesses enoyl-CoA hydratase activity against long chain substrates (C14-C18) and 3-hydroxyacyl-CoA dehydrogenase activity against chains of variable sizes (C6-C18). Possesses 3-hydroxy-3-phenylpropionyl-CoA dehydrogenase activity and is involved in the peroxisomal beta-oxidation pathway for the biosynthesis of benzoic acid (BA). Required for the accumulation in seeds of substituted hydroxybenzoylated choline esters, which are BA-containing secondary metabolites. Fatty acid beta-oxidation pathway in peroxisomes regulates gene silencing, histone acetylation and DNA methylation. The polypeptide is Peroxisomal fatty acid beta-oxidation multifunctional protein MFP2 (Arabidopsis thaliana (Mouse-ear cress)).